The following is a 115-amino-acid chain: MKFVLLFGVFLVTLFSYSSAEMLDDFDQADEDELLSLIEKEEARAKECTPRFYDCSHDRHSCCRSELFKDVCTCFYPEGGDNEVCTCQQPKHLKYMEKAADKAKKFGGKIKKWFG.

The signal sequence occupies residues 1–20; sequence MKFVLLFGVFLVTLFSYSSA. Residues 21–44 constitute a propeptide that is removed on maturation; it reads EMLDDFDQADEDELLSLIEKEEAR. 4 disulfides stabilise this stretch: Cys48–Cys63, Cys55–Cys72, Cys62–Cys87, and Cys74–Cys85.

Belongs to the neurotoxin 19 (CSTX) family. 01 subfamily. In terms of tissue distribution, expressed by the venom gland.

The protein localises to the secreted. This chain is U3-lycotoxin-Ls1a, found in Lycosa singoriensis (Wolf spider).